A 719-amino-acid chain; its full sequence is Pesticidal crystal protein Cry1Ic (719 aa).

The protein belongs to the delta endotoxin family.

In terms of biological role, promotes colloidosmotic lysis by binding to the midgut epithelial cells of insects. This is Pesticidal crystal protein Cry1Ic (cry1Ic) from Bacillus thuringiensis.